The sequence spans 504 residues: D-alanine--D-alanyl carrier protein ligase (504 aa).

Position 152 to 153 (152 to 153 (TS)) interacts with ATP. Asp197 contacts D-alanine. Position 292 to 297 (292 to 297 (NTYGPT)) interacts with ATP. Val301 contributes to the D-alanine binding site. ATP is bound by residues Asp383, 394–397 (YNGR), and Lys492. Lys492 is a D-alanine binding site.

The protein belongs to the ATP-dependent AMP-binding enzyme family. DltA subfamily.

It is found in the cytoplasm. It carries out the reaction holo-[D-alanyl-carrier protein] + D-alanine + ATP = D-alanyl-[D-alanyl-carrier protein] + AMP + diphosphate. It participates in cell wall biogenesis; lipoteichoic acid biosynthesis. Functionally, catalyzes the first step in the D-alanylation of lipoteichoic acid (LTA), the activation of D-alanine and its transfer onto the D-alanyl carrier protein (Dcp) DltC. In an ATP-dependent two-step reaction, forms a high energy D-alanyl-AMP intermediate, followed by transfer of the D-alanyl residue as a thiol ester to the phosphopantheinyl prosthetic group of the Dcp. D-alanylation of LTA plays an important role in modulating the properties of the cell wall in Gram-positive bacteria, influencing the net charge of the cell wall. The protein is D-alanine--D-alanyl carrier protein ligase of Bacillus cereus (strain ZK / E33L).